Consider the following 233-residue polypeptide: MDIGSNEILVASDYDRTLASEENNFVISPIVSQKVNEFSKKYKFVVVTGREKKFIDKLAVGLKPTAWILENGSLILFNDREFVLCEKSWFERDRKKIIEILDNLKVRYSIGRIILYVDGYGSKLDMLSEIEKYGRIEVNRNDAMILPKGVDKGVGVLKFKELTGFKGKIIALGDSENDYALFRVADIKVAVANAIPQIKEIADIVTENPNGLGVVEILDKILSGNFGKEVDIY.

Asp13 functions as the Nucleophile in the catalytic mechanism. Mg(2+) is bound by residues Asp13 and Asp15. Residue Lys152 coordinates substrate. Asp174 and Asp178 together coordinate Mg(2+).

This sequence belongs to the archaeal SPP-like hydrolase family. It depends on Mg(2+) as a cofactor.

The enzyme catalyses 2-phosphoglycolate + H2O = glycolate + phosphate. Catalyzes the dephosphorylation of 2-phosphoglycolate. The protein is Phosphoglycolate phosphatase 2 of Saccharolobus solfataricus (strain ATCC 35092 / DSM 1617 / JCM 11322 / P2) (Sulfolobus solfataricus).